Here is a 68-residue protein sequence, read N- to C-terminus: Translational regulator CsrA 1 (68 aa).

Belongs to the CsrA/RsmA family. In terms of assembly, homodimer; the beta-strands of each monomer intercalate to form a hydrophobic core, while the alpha-helices form wings that extend away from the core.

The protein localises to the cytoplasm. In terms of biological role, a key translational regulator that binds mRNA to regulate translation initiation and/or mRNA stability. Mediates global changes in gene expression, shifting from rapid growth to stress survival by linking envelope stress, the stringent response and the catabolite repression systems. Usually binds in the 5'-UTR; binding at or near the Shine-Dalgarno sequence prevents ribosome-binding, repressing translation, binding elsewhere in the 5'-UTR can activate translation and/or stabilize the mRNA. Its function is antagonized by small RNA(s). The sequence is that of Translational regulator CsrA 1 from Coxiella burnetii (strain RSA 493 / Nine Mile phase I).